The following is a 244-amino-acid chain: tRNA pseudouridine synthase A (244 aa).

D52 (nucleophile) is an active-site residue. A substrate-binding site is contributed by Y110.

This sequence belongs to the tRNA pseudouridine synthase TruA family. In terms of assembly, homodimer.

The enzyme catalyses uridine(38/39/40) in tRNA = pseudouridine(38/39/40) in tRNA. Its function is as follows. Formation of pseudouridine at positions 38, 39 and 40 in the anticodon stem and loop of transfer RNAs. This chain is tRNA pseudouridine synthase A, found in Pelobacter propionicus (strain DSM 2379 / NBRC 103807 / OttBd1).